We begin with the raw amino-acid sequence, 127 residues long: Protein chibby homolog 1 (127 aa).

The disordered stretch occupies residues 1–25 (MPLFGSIFSPKKTPPRKSASLSNLH). A phosphoserine mark is found at Ser-9 and Ser-20. The tract at residues 60–112 (VADSVISGGVDRRETQRLRKRNQQLEEENNLLRLKVDILLDMLSETTAESHLK) is minimal region for the interaction with PKD2. Residues 68 to 110 (GVDRRETQRLRKRNQQLEEENNLLRLKVDILLDMLSETTAESH) are a coiled coil. The interval 77 to 98 (LRKRNQQLEEENNLLRLKVDIL) is leucine-zipper; mediates homodimerization.

The protein belongs to the chibby family. In terms of assembly, homodimer. Homodimerization is essential for nuclear localization and interaction with KPNA4 but is dispensable for interaction with CTNNB1. Interacts with polycystin-2/PKD2 and GM130. Interacts with the C-terminal region of CTNNB1. Interacts (C-terminus) with TCIM (C-terminus), TCIM competes with CTNNB1 for the interaction with CBY1. Interacts with FAM92A; this interaction facilitates targeting of FAM92A to cilium basal body. Interacts with CIBAR2. Interacts with KPNA4.

The protein localises to the nucleus speckle. The protein resides in the cytoplasm. It is found in the cytoskeleton. It localises to the cilium basal body. Its subcellular location is the microtubule organizing center. The protein localises to the centrosome. The protein resides in the centriole. It is found in the golgi apparatus. It localises to the trans-Golgi network. Its subcellular location is the cell projection. The protein localises to the cilium. The protein resides in the flagellum. It is found in the nucleus. Functionally, inhibits the Wnt/Wingless pathway by binding to CTNNB1/beta-catenin and inhibiting beta-catenin-mediated transcriptional activation through competition with TCF/LEF transcription factors. Has also been shown to play a role in regulating the intracellular trafficking of polycystin-2/PKD2 and possibly of other intracellular proteins. Promotes adipocyte and cardiomyocyte differentiation. The sequence is that of Protein chibby homolog 1 (Cby1) from Rattus norvegicus (Rat).